We begin with the raw amino-acid sequence, 235 residues long: Small ribosomal subunit protein eS6 (235 aa).

Residues 190-212 form a disordered region; it reads GFHPRERGERRRKSVRGRMIPDP.

Belongs to the eukaryotic ribosomal protein eS6 family.

The protein is Small ribosomal subunit protein eS6 of Aeropyrum pernix (strain ATCC 700893 / DSM 11879 / JCM 9820 / NBRC 100138 / K1).